We begin with the raw amino-acid sequence, 65 residues long: Large ribosomal subunit protein bL35 (65 aa).

It belongs to the bacterial ribosomal protein bL35 family.

The protein is Large ribosomal subunit protein bL35 of Sorangium cellulosum (strain So ce56) (Polyangium cellulosum (strain So ce56)).